We begin with the raw amino-acid sequence, 710 residues long: Methionine--tRNA ligase (710 aa).

A 'HIGH' region motif is present at residues 26-36; sequence PYANGQIHIGH. Residues cysteine 157, cysteine 160, cysteine 170, and cysteine 173 each contribute to the Zn(2+) site. A 'KMSKS' region motif is present at residues 347 to 351; sequence KMSKS. Lysine 350 provides a ligand contact to ATP. One can recognise a tRNA-binding domain in the interval 604–710; the sequence is DFAKIDLRIA…SGAKPGMRVK (107 aa).

The protein belongs to the class-I aminoacyl-tRNA synthetase family. MetG type 1 subfamily. Homodimer. Zn(2+) serves as cofactor.

The protein localises to the cytoplasm. It catalyses the reaction tRNA(Met) + L-methionine + ATP = L-methionyl-tRNA(Met) + AMP + diphosphate. Is required not only for elongation of protein synthesis but also for the initiation of all mRNA translation through initiator tRNA(fMet) aminoacylation. This Paraburkholderia xenovorans (strain LB400) protein is Methionine--tRNA ligase.